The sequence spans 135 residues: NADH-quinone oxidoreductase subunit K (135 aa).

A run of 3 helical transmembrane segments spans residues 33-53 (VLGL…FAIG), 63-83 (FLFM…AFVV), and 95-115 (IMFI…LAIL).

The protein belongs to the complex I subunit 4L family. NDH-1 is composed of 14 different subunits. Subunits NuoA, H, J, K, L, M, N constitute the membrane sector of the complex.

The protein localises to the cell inner membrane. The enzyme catalyses a quinone + NADH + 5 H(+)(in) = a quinol + NAD(+) + 4 H(+)(out). NDH-1 shuttles electrons from NADH, via FMN and iron-sulfur (Fe-S) centers, to quinones in the respiratory chain. The immediate electron acceptor for the enzyme in this species is believed to be ubiquinone. Couples the redox reaction to proton translocation (for every two electrons transferred, four hydrogen ions are translocated across the cytoplasmic membrane), and thus conserves the redox energy in a proton gradient. The chain is NADH-quinone oxidoreductase subunit K from Psychrobacter cryohalolentis (strain ATCC BAA-1226 / DSM 17306 / VKM B-2378 / K5).